We begin with the raw amino-acid sequence, 540 residues long: 2,3-bisphosphoglycerate-independent phosphoglycerate mutase (540 aa).

Mn(2+) is bound by residues Asp-24 and Ser-74. The active-site Phosphoserine intermediate is Ser-74. Substrate is bound by residues His-135, 165-166 (RD), Arg-197, Arg-203, 268-271 (RPDR), and Lys-341. Positions 408, 412, 449, 450, and 467 each coordinate Mn(2+).

It belongs to the BPG-independent phosphoglycerate mutase family. Monomer. The cofactor is Mn(2+).

It carries out the reaction (2R)-2-phosphoglycerate = (2R)-3-phosphoglycerate. The protein operates within carbohydrate degradation; glycolysis; pyruvate from D-glyceraldehyde 3-phosphate: step 3/5. Functionally, catalyzes the interconversion of 2-phosphoglycerate and 3-phosphoglycerate. The sequence is that of 2,3-bisphosphoglycerate-independent phosphoglycerate mutase from Prochlorococcus marinus (strain MIT 9313).